Reading from the N-terminus, the 201-residue chain is UPF0056 membrane protein PH0760 (201 aa).

6 helical membrane passes run 8-28 (FMILYTGMFAITNPIGAVPVF), 49-69 (ITVFITLTVFALVGQWIFKFF), 73-93 (IDAFAIAGGILLFRMGMEMLS), 111-131 (VAVIPLAIPLISGPGAITTVM), 140-160 (GIVILTIIAIGLTTYGILYSG), and 181-201 (LILTSMAMQMIINGIKGAFGI).

The protein belongs to the UPF0056 (MarC) family.

It localises to the cell membrane. The polypeptide is UPF0056 membrane protein PH0760 (Pyrococcus horikoshii (strain ATCC 700860 / DSM 12428 / JCM 9974 / NBRC 100139 / OT-3)).